Here is a 134-residue protein sequence, read N- to C-terminus: Sec-independent protein translocase protein TatB (134 aa).

Residues 2-22 (FDGIGFMELLLIGILGLVVLG) form a helical membrane-spanning segment. Residues 90–134 (AESVNRPYKVEDTSPVAPKASPDESPSVVEAKSSEATSENSSTPK) are disordered. Over residues 123 to 134 (SEATSENSSTPK) the composition is skewed to polar residues.

It belongs to the TatB family. The Tat system comprises two distinct complexes: a TatABC complex, containing multiple copies of TatA, TatB and TatC subunits, and a separate TatA complex, containing only TatA subunits. Substrates initially bind to the TatABC complex, which probably triggers association of the separate TatA complex to form the active translocon.

The protein localises to the cell inner membrane. Part of the twin-arginine translocation (Tat) system that transports large folded proteins containing a characteristic twin-arginine motif in their signal peptide across membranes. Together with TatC, TatB is part of a receptor directly interacting with Tat signal peptides. TatB may form an oligomeric binding site that transiently accommodates folded Tat precursor proteins before their translocation. This chain is Sec-independent protein translocase protein TatB, found in Shewanella frigidimarina (strain NCIMB 400).